Consider the following 972-residue polypeptide: MERMNWLSRLASRGPGHRIPQGANLQTPVMADPETCLMVFKNHWSQVVRILERQGPRAAPGGADDLSAVRNHTYQMLTLLAEDRAVPSAPTGPGPLLEFALHEDLLTRVLTWQLQWDELGDGVEERRAEQLKLFEMLVSEARQPLLRHGPVREALLTLLDACGRPVPSSPALDEGLVLLLSQLCVCVAQEPSLLEFFLQPPPEPGAAPRLLLFSRLVPFVHREGTLGQQARDALLLLMALSAGSPTVGRYIADHSYFCPVLATGLSALYSSLPRKIEVPGDDWHCLRREDWLGVPALALFMSSLEFCNAVIQVAHPLVQKQLVDYIHNGFLVPVMGPALHKTSVEEMIASTAYLELFLRSISEPALLRTFLRFLLLHRHDTHTILDTLVARIGSNSRLCMVSLSLFRTLLNLSCEDVLLQLVLRYLVPCNHVMLSQKPAVRDVDLYGRAADKFLSLIPRCCRHHAPSPPRPEHASWARGPGSPSVDSSSVTTVPRPSTPSRLALFLRQQSLGGSESPGPAPCSPGLSASPASSPGRRPTPAEEPGELEDNYLEYLREARRGVDRCVRACRTWSAPYDGERPSPEPSPFGSRTKKRSLLPEEDRNNVGEGEEEELGRRGRAGGAGEGPGHLPPPQLNGVPGSWPEGAKKVRLVPKEGAGELLEGISEGMAGLEGFGQELRELEVALSNGGTGSESPLEPPLPLEEEEAYESFTCPPEPPGPFLSSPLRTLNQLPSQPFTGPFMAVLFAKLENMLQNSVYVNFLLTGLVAQLACHPQPLLRSFLLNTNMVFQPSVKSLLQVLGSVKNKIENFAASQEDFPALLSKAKKYLIARGKLDWAEGPAAGPAPRRSDPLVKSRRPSLGELLLRHAHSPTRARQAAQLVLQPGRDGAGLGLSGGSPGASTPVLLTRGGAPERQGEALRVKNAVYCAVIFPEFLKELAAISQAHAVTSPFLLETSEEGSGPLISGCGPLNP.

Disordered regions lie at residues 465 to 548 (APSP…GELE) and 573 to 644 (SAPY…SWPE). Ser-467 carries the phosphoserine modification. The span at 478-501 (RGPGSPSVDSSSVTTVPRPSTPSR) shows a compositional bias: low complexity. 4 positions are modified to phosphoserine: Ser-510, Ser-523, Ser-529, and Ser-533. Low complexity predominate over residues 523-535 (SPGLSASPASSPG). A phosphoserine mark is found at Ser-859 and Ser-897.

Belongs to the FHIP family. In terms of assembly, component of the FTS/Hook/FHIP complex (FHF complex), composed of AKTIP/FTS, FHIP1B, and one or more members of the Hook family of proteins HOOK1, HOOK2, and HOOK3. The FHF complex associates with the homotypic vesicular sorting complex (the HOPS complex).

Its function is as follows. Component of the FTS/Hook/FHIP complex (FHF complex). The FHF complex may function to promote vesicle trafficking and/or fusion via the homotypic vesicular protein sorting complex (the HOPS complex). FHF complex promotes the distribution of AP-4 complex to the perinuclear area of the cell. The chain is FHF complex subunit HOOK-interacting protein 1B from Homo sapiens (Human).